Consider the following 397-residue polypeptide: Tryptophan synthase beta chain (397 aa).

Position 91 is an N6-(pyridoxal phosphate)lysine (K91).

The protein belongs to the TrpB family. Tetramer of two alpha and two beta chains. Requires pyridoxal 5'-phosphate as cofactor.

It catalyses the reaction (1S,2R)-1-C-(indol-3-yl)glycerol 3-phosphate + L-serine = D-glyceraldehyde 3-phosphate + L-tryptophan + H2O. The protein operates within amino-acid biosynthesis; L-tryptophan biosynthesis; L-tryptophan from chorismate: step 5/5. In terms of biological role, the beta subunit is responsible for the synthesis of L-tryptophan from indole and L-serine. This chain is Tryptophan synthase beta chain, found in Bacillus cereus (strain G9842).